Consider the following 586-residue polypeptide: MDKYTNRDHPDYIPGTFNIYSSQNLENGIIYESKLKKTSSGVVLIPQPSYSPNDPLNWSSWRKLAHFGLMAFITAFTAATSNDAGAAQDSLNEIYGISYDSMNTGAGVLFLGIGWSTLFLAPFANLYGRKITYIVCTTLGLFGALWFALAKRTSDTIWSQLFVGISESCAEAQVQLSLSDIFFQHQLGSVLTVYIMCTSIGTFLGPLIAGYISAFTNFRWVGWVAVIISGGLLITIIFGCEETYFDRGQYMTPLTSCQSGYEDGTTLQNSDNTAVSRRKRHLDAKLSTPGAMGEKGVDLSETAEFEVNNEEEVTIPETRELIDGSKEHLKPYPKRVAILTKATNLKGYGFKQYFKYLKINLRMFLFPPVWLSGMFWGIQDVFLTFYLTTQESAYYEPPWNYSDFGVAIMNVPTLIGAVIGCICAGIVSDYFVLWMARHNRGILEAEFRLYFSIATAIIGPAGLLMFGIGTARQWPWQAIYVGLGFVGFAWGCSGDIAMAYLMDCYPDMVLEGMVCTAIINNTISCIFTFTCSDWLAASGTENTYIALAVINFGITAFALPMYYYGKRIRLWTKRWYLQSVNLRDGV.

Residues 1 to 66 are Extracellular-facing; that stretch reads MDKYTNRDHP…NWSSWRKLAH (66 aa). The helical transmembrane segment at 67–87 threads the bilayer; it reads FGLMAFITAFTAATSNDAGAA. Residues 88-103 lie on the Cytoplasmic side of the membrane; sequence QDSLNEIYGISYDSMN. Residues 104 to 124 form a helical membrane-spanning segment; sequence TGAGVLFLGIGWSTLFLAPFA. Topologically, residues 125–130 are extracellular; that stretch reads NLYGRK. A helical membrane pass occupies residues 131 to 151; sequence ITYIVCTTLGLFGALWFALAK. The Cytoplasmic portion of the chain corresponds to 152–189; that stretch reads RTSDTIWSQLFVGISESCAEAQVQLSLSDIFFQHQLGS. A helical membrane pass occupies residues 190-210; it reads VLTVYIMCTSIGTFLGPLIAG. Residues 211-219 lie on the Extracellular side of the membrane; sequence YISAFTNFR. The chain crosses the membrane as a helical span at residues 220–240; it reads WVGWVAVIISGGLLITIIFGC. At 241–362 the chain is on the cytoplasmic side; sequence EETYFDRGQY…YFKYLKINLR (122 aa). The helical transmembrane segment at 363–383 threads the bilayer; that stretch reads MFLFPPVWLSGMFWGIQDVFL. Residues 384-413 are Extracellular-facing; it reads TFYLTTQESAYYEPPWNYSDFGVAIMNVPT. The chain crosses the membrane as a helical span at residues 414–434; that stretch reads LIGAVIGCICAGIVSDYFVLW. The Cytoplasmic segment spans residues 435–448; the sequence is MARHNRGILEAEFR. The chain crosses the membrane as a helical span at residues 449–469; it reads LYFSIATAIIGPAGLLMFGIG. Topologically, residues 470 to 477 are extracellular; it reads TARQWPWQ. Residues 478–498 form a helical membrane-spanning segment; the sequence is AIYVGLGFVGFAWGCSGDIAM. Over 499–508 the chain is Cytoplasmic; sequence AYLMDCYPDM. A helical transmembrane segment spans residues 509–529; it reads VLEGMVCTAIINNTISCIFTF. The Extracellular segment spans residues 530–544; the sequence is TCSDWLAASGTENTY. A helical transmembrane segment spans residues 545–565; it reads IALAVINFGITAFALPMYYYG. Residues 566 to 586 are Cytoplasmic-facing; that stretch reads KRIRLWTKRWYLQSVNLRDGV.

The protein localises to the membrane. In terms of biological role, seems to be involved in the uptake of several cations and of histidinol. The protein is Protein HOL1 (HOL1) of Saccharomyces cerevisiae (strain ATCC 204508 / S288c) (Baker's yeast).